Here is a 175-residue protein sequence, read N- to C-terminus: MVLLHKSTHIFPTDFASVSRAFFNRYPNPYSPHVLSIDTISRNVDQEGNLRTTRLLKKSGKLPTWVKPFLRGITETWIIEVSVVNPANSTMKTYTRNLDHTGIMKVEEYTTYQFDSATSSTIADSRVKFSSGFNMGIKSKVEDWSRTKFDENVKKSRMGMAFVIQKLEEARNPQF.

The required for mitochondrial targeting stretch occupies residues 1–80 (MVLLHKSTHI…RGITETWIIE (80 aa)). Positions 2–172 (VLLHKSTHIF…VIQKLEEARN (171 aa)) constitute a PRELI/MSF1 domain. A 1,2-diacyl-sn-glycero-3-phosphate contacts are provided by Tyr26, Lys58, Lys148, and Asn152.

It belongs to the slowmo family. As to quaternary structure, interacts with MDM35. Found associated with a 170 kDa complex.

The protein localises to the mitochondrion inner membrane. Its subcellular location is the mitochondrion intermembrane space. In terms of biological role, required for maintenance of normal mitochondrial morphology. Required for PCP1-dependent processing of MGM1. The UPS1:MDM35 complex mediates the transfer of phosphatidic acid (PA) between liposomes and probably functions as a PA transporter across the mitochondrion intermembrane space. Phosphatidic acid release requires dissociation of the UPS1:MDM35 complex. Phosphatidic acid import is required for cardiolipin (CL) synthesis in the mitochondrial inner membrane. With UPS2, controls the level of cardiolipin in mitochondria. Cardiolipin is a unique phospholipid with four fatty acid chains and is present mainly in the mitochondrial inner membrane where it stabilizes the electron transport chain supercomplex between complexes III and IV through direct interaction of their subunits. The chain is Protein UPS1, mitochondrial (UPS1) from Saccharomyces cerevisiae (strain ATCC 204508 / S288c) (Baker's yeast).